The chain runs to 313 residues: Ankyrin repeat family A protein 2 (313 aa).

ANK repeat units follow at residues 148 to 180 (ANSL…HTDE), 181 to 213 (EGFT…LLGK), 214 to 246 (GRES…EYDW), 247 to 279 (NGGT…IETD), and 280 to 313 (SGYN…NIKE).

As to quaternary structure, interacts (via ANK repeats) with CCDC8 (via PxLPxI/L motif); mediates the interaction with the 3M complex which is composed of CCDC8, CUL7 and OBSL1. Interacts (via ANK repeats) with HDAC4 (via PxLPxI/L motif). Interacts (via ANK repeats) with HDAC5 (via PxLPxI/L motif). Interacts (via ANK repeats) with LRP2/megalin (via PxLPxI/L motif). Interacts (via ANK repeats) with RFX7 (via PxLPxI/L motif). Interacts with AHRR. Interacts with NEK6.

The protein resides in the cytoplasm. It is found in the cytoskeleton. It localises to the membrane. Functionally, may regulate the interaction between the 3M complex and the histone deacetylases HDAC4 and HDAC5. May also regulate LRP2/megalin. The sequence is that of Ankyrin repeat family A protein 2 (ANKRA2) from Bos taurus (Bovine).